A 34-amino-acid chain; its full sequence is Photosystem II reaction center protein Y (34 aa).

Residues 1–5 (DWRVL) lie on the Lumenal side of the membrane. Residues 6–22 (VVLLPVLLAAGWAVRNI) traverse the membrane as a helical segment. Residues 23 to 34 (LPYAVKQVQKLL) lie on the Cytoplasmic side of the membrane.

Belongs to the PsbY family. In terms of assembly, PSII is composed of 1 copy each of membrane proteins PsbA, PsbB, PsbC, PsbD, PsbE, PsbF, PsbH, PsbI, PsbJ, PsbK, PsbL, PsbM, PsbT, PsbX, PsbY, PsbZ, Psb30/Ycf12, peripheral proteins PsbO, CyanoQ (PsbQ), PsbU, PsbV and a large number of cofactors. It forms dimeric complexes. This protein is only loosely associated with PSII, and is not often found in crystals. PSII binds multiple chlorophylls, carotenoids and specific lipids. serves as cofactor.

The protein resides in the cellular thylakoid membrane. Its function is as follows. Loosely associated component of the core of photosystem II (PSII). PSII is a light-driven water plastoquinone oxidoreductase, using light energy to abstract electrons from H(2)O, generating a proton gradient subsequently used for ATP formation. This chain is Photosystem II reaction center protein Y, found in Thermostichus vulcanus (Synechococcus vulcanus).